A 1354-amino-acid chain; its full sequence is Eukaryotic translation initiation factor 3 subunit A (1354 aa).

Lys-68 is modified (N6-acetyllysine). Residues 82–120 are a coiled coil; that stretch reads NIKSLEDVVRAYLKLAEEKTEAAKEESQQMVLDIEDLDN. Residues 315–498 form the PCI domain; the sequence is MQRMSTRVLL…RTLSFGSDLN (184 aa). Ser-492 and Ser-584 each carry phosphoserine. The interaction with EIF3B stretch occupies residues 664-835; that stretch reads LDPDFIMAKQ…REERERAERA (172 aa). 3 disordered regions span residues 809–844, 866–1249, and 1262–1354; these read EKEE…LREY, EERE…RDRD, and DLRD…TVRR. Basic and acidic residues-rich tracts occupy residues 866–1136, 1148–1249, 1262–1302, and 1310–1343; these read EERE…DDAR, GWRE…RDRD, DLRD…DPPR, and SRER…TKNE. Ser-895 bears the Phosphoserine mark. One copy of the 1; truncated repeat lies at 924 to 931; that stretch reads DDERPHRR. The segment at 924 to 1143 is 22 X 10 AA approximate tandem repeats of [DA]-[DE]-[ED]-R-[PLIGFSV]-[RPS]-[RW]-[RL]-[GNIHT]-[DGLPTAM]; sequence DDERPHRRDE…DARPGPWRPF (220 aa). Repeat unit 2 spans residues 932–941; it reads DEDRLRRLGG. A 3; approximate repeat occupies 942-951; it reads DDEERESSLR. Ser-949 is subject to Phosphoserine. 18 consecutive repeat copies span residues 953 to 962, 963 to 972, 973 to 982, 983 to 992, 993 to 1002, 1003 to 1012, 1013 to 1022, 1023 to 1032, 1033 to 1042, 1043 to 1052, 1053 to 1062, 1064 to 1073, 1074 to 1083, 1084 to 1093, 1094 to 1103, 1104 to 1113, 1114 to 1123, and 1124 to 1133. Residue Ser-1038 is modified to Phosphoserine. The stretch at 1134-1143 is one 22; approximate repeat; it reads DARPGPWRPF. Ser-1159 and Ser-1233 each carry phosphoserine. Ser-1310 and Ser-1336 each carry phosphoserine.

It belongs to the eIF-3 subunit A family. As to quaternary structure, component of the eukaryotic translation initiation factor 3 (eIF-3) complex, which is composed of 13 subunits: EIF3A, EIF3B, EIF3C, EIF3D, EIF3E, EIF3F, EIF3G, EIF3H, EIF3I, EIF3J, EIF3K, EIF3L and EIF3M. The eIF-3 complex appears to include 3 stable modules: module A is composed of EIF3A, EIF3B, EIF3G and EIF3I; module B is composed of EIF3F, EIF3H, and EIF3M; and module C is composed of EIF3C, EIF3D, EIF3E, EIF3L and EIF3K. EIF3C of module C binds EIF3B of module A and EIF3H of module B, thereby linking the three modules. EIF3J is a labile subunit that binds to the eIF-3 complex via EIF3B. The eIF-3 complex interacts with RPS6KB1 under conditions of nutrient depletion. Mitogenic stimulation leads to binding and activation of a complex composed of MTOR and RPTOR, leading to phosphorylation and release of RPS6KB1 and binding of EIF4B to eIF-3. Interacts with EIF4G1. Also interacts with KRT7 and PIWIL2. Phosphorylated. Phosphorylation is enhanced upon serum stimulation.

The protein resides in the cytoplasm. Functionally, RNA-binding component of the eukaryotic translation initiation factor 3 (eIF-3) complex, which is required for several steps in the initiation of protein synthesis. The eIF-3 complex associates with the 40S ribosome and facilitates the recruitment of eIF-1, eIF-1A, eIF-2:GTP:methionyl-tRNAi and eIF-5 to form the 43S pre-initiation complex (43S PIC). The eIF-3 complex stimulates mRNA recruitment to the 43S PIC and scanning of the mRNA for AUG recognition. The eIF-3 complex is also required for disassembly and recycling of post-termination ribosomal complexes and subsequently prevents premature joining of the 40S and 60S ribosomal subunits prior to initiation. The eIF-3 complex specifically targets and initiates translation of a subset of mRNAs involved in cell proliferation, including cell cycling, differentiation and apoptosis, and uses different modes of RNA stem-loop binding to exert either translational activation or repression. The protein is Eukaryotic translation initiation factor 3 subunit A (Eif3a) of Rattus norvegicus (Rat).